The primary structure comprises 316 residues: Acetaldehyde dehydrogenase (316 aa).

13-16 is an NAD(+) binding site; that stretch reads SGNI. Cysteine 131 functions as the Acyl-thioester intermediate in the catalytic mechanism. Residues 162–170 and asparagine 290 contribute to the NAD(+) site; that span reads SAGPGTRAN.

The protein belongs to the acetaldehyde dehydrogenase family.

The enzyme catalyses acetaldehyde + NAD(+) + CoA = acetyl-CoA + NADH + H(+). Functionally, catalyzes the conversion of acetaldehyde to acetyl-CoA, using NAD(+) and coenzyme A. Is the final enzyme in the meta-cleavage pathway for the degradation of 2-aminophenol. In Pseudomonas sp, this protein is Acetaldehyde dehydrogenase (amnH).